The following is a 269-amino-acid chain: Staphylococcal secretory antigen ssaA2 (269 aa).

Residues 1 to 27 form the signal peptide; it reads MKKIATATIATAGFATIAIASGNQAHA. 7 tandem repeats follow at residues 83–85, 88–90, 91–93, 97–99, 103–105, 106–108, and 115–117. The tract at residues 83 to 115 is 7 X 3 AA repeats of Y-[NS]-N; sequence YNNYNYNNYNNGYSYNNYSRYNNYSNNNQSYNY. Residues 148-269 form the Peptidase C51 domain; sequence MAPSSNGRSI…SQAAGYNFIH (122 aa).

The protein localises to the secreted. Not known; immunogenic protein. In Staphylococcus aureus (strain MSSA476), this protein is Staphylococcal secretory antigen ssaA2 (ssaA2).